A 342-amino-acid chain; its full sequence is Platelet-activating factor receptor (342 aa).

The Extracellular segment spans residues 1–16 (MEPNNSFRVDSEFRYT). N-linked (GlcNAc...) asparagine glycosylation is present at Asn-4. A helical membrane pass occupies residues 17–38 (LFPIFYSIVFVLGVIANSYVLW). The Cytoplasmic segment spans residues 39 to 54 (VFARLYPSKKFNEIKI). The helical transmembrane segment at 55–74 (FMVNLTMADLLFLVTLPLWI) threads the bilayer. Residues 75 to 91 (VYYYNQGDWILPKFLCN) lie on the Extracellular side of the membrane. A disulfide bridge links Cys-90 with Cys-173. Residues 92–113 (LAGCFFFINTYCSVAFLAVITY) traverse the membrane as a helical segment. At 114-133 (NRFQAVTRPIKTAQATTRKR) the chain is on the cytoplasmic side. The helical transmembrane segment at 134–155 (GFLLSLIIWVSIVGAASYFFVL) threads the bilayer. The Extracellular segment spans residues 156–184 (DSTNSEPKKTGSGNITRCFEHYEKGSIPV). Asn-169 carries an N-linked (GlcNAc...) asparagine glycan. Residues 185-205 (LIIHIFLVFSFFLVFLIILFC) traverse the membrane as a helical segment. Over 206–233 (NLVIIRTLLTQQVQMQRNAEVKRRALWM) the chain is Cytoplasmic. Residues 234 to 254 (VCTVLAVFVICFVPHHLVQLP) traverse the membrane as a helical segment. The Extracellular segment spans residues 255–276 (WTLAELGFQDTDFHQGINDAHQ). Residues 277–296 (VTLCLLSTNCVLDPIIYCFL) form a helical membrane-spanning segment. The Cytoplasmic portion of the chain corresponds to 297–342 (TKKFRKHLTEKLYSMRESRKCSRATSETGTEVVVQLKDAPIKSLKY).

Belongs to the G-protein coupled receptor 1 family. In terms of assembly, interacts with ARRB1.

Its subcellular location is the cell membrane. Its function is as follows. Receptor for platelet activating factor, a chemotactic phospholipid mediator that possesses potent inflammatory, smooth-muscle contractile and hypotensive activity. Seems to mediate its action via a G protein that activates a phosphatidylinositol-calcium second messenger system. The sequence is that of Platelet-activating factor receptor from Capra hircus (Goat).